Here is an 884-residue protein sequence, read N- to C-terminus: E3 ubiquitin-protein ligase BRE1-like 1 (884 aa).

The disordered stretch occupies residues 1–37 (MGSTGEPDRKRRLSSSVAPGGGAPVSPAKRLAVAPTS). Residues 49-86 (YKNQKLSEQLEAHKFEYRALENKFAGLKEKQRTHNETL) adopt a coiled-coil conformation. Residues 107–127 (KSGSPNSSPGSGHNNVQKDGT) form a disordered region. Residues 108–121 (SGSPNSSPGSGHNN) are compositionally biased toward low complexity. 4 coiled-coil regions span residues 216–541 (LNNV…ELKL), 580–663 (SKLE…LQQI), 696–762 (RNLQ…QSLD), and 789–827 (KKRI…KEYR). The RING-type zinc-finger motif lies at 832–871 (CGICHDRQKEVVITKCYHLFCNQCIQKSLGNRQRRCPSCS).

This sequence belongs to the BRE1 family.

The protein resides in the nucleus. It catalyses the reaction S-ubiquitinyl-[E2 ubiquitin-conjugating enzyme]-L-cysteine + [acceptor protein]-L-lysine = [E2 ubiquitin-conjugating enzyme]-L-cysteine + N(6)-ubiquitinyl-[acceptor protein]-L-lysine.. It participates in protein modification; protein ubiquitination. Functionally, E3 ubiquitin-protein ligase that monoubiquitinates H2B to form H2BK143ub1. H2BK143ub1 gives a specific tag for epigenetic transcriptional activation and is also prerequisite for H3K4me and maybe H3K79me. It thereby plays a central role in histone code and gene regulation. Forms a ubiquitin ligase complex in cooperation with the E2 enzyme UBC2/RAD6. The sequence is that of E3 ubiquitin-protein ligase BRE1-like 1 (BRE1A) from Oryza sativa subsp. indica (Rice).